Here is a 474-residue protein sequence, read N- to C-terminus: Phosphomannomutase (474 aa).

The Phosphoserine intermediate role is filled by Ser-101. Mg(2+) contacts are provided by Ser-101, Asp-242, Asp-244, and Asp-246.

This sequence belongs to the phosphohexose mutase family. Mg(2+) serves as cofactor.

It catalyses the reaction alpha-D-mannose 1-phosphate = D-mannose 6-phosphate. This is Phosphomannomutase (noeK) from Sinorhizobium fredii (strain NBRC 101917 / NGR234).